We begin with the raw amino-acid sequence, 93 residues long: Small ribosomal subunit protein uS17 (93 aa).

This sequence belongs to the universal ribosomal protein uS17 family. As to quaternary structure, part of the 30S ribosomal subunit.

In terms of biological role, one of the primary rRNA binding proteins, it binds specifically to the 5'-end of 16S ribosomal RNA. This is Small ribosomal subunit protein uS17 from Corynebacterium kroppenstedtii (strain DSM 44385 / JCM 11950 / CIP 105744 / CCUG 35717).